The sequence spans 110 residues: Large ribosomal subunit protein uL22 (110 aa).

The protein belongs to the universal ribosomal protein uL22 family. In terms of assembly, part of the 50S ribosomal subunit.

Its function is as follows. This protein binds specifically to 23S rRNA; its binding is stimulated by other ribosomal proteins, e.g. L4, L17, and L20. It is important during the early stages of 50S assembly. It makes multiple contacts with different domains of the 23S rRNA in the assembled 50S subunit and ribosome. Functionally, the globular domain of the protein is located near the polypeptide exit tunnel on the outside of the subunit, while an extended beta-hairpin is found that lines the wall of the exit tunnel in the center of the 70S ribosome. This is Large ribosomal subunit protein uL22 from Paraburkholderia phytofirmans (strain DSM 17436 / LMG 22146 / PsJN) (Burkholderia phytofirmans).